A 256-amino-acid polypeptide reads, in one-letter code: MADWSAEQYLKFEDERTRPARDLLAQIPRLEARQIADIGCGPGNSTELLARRWPQAKIIGIDTSADMLRQARERLPDATFIEANVAHWVPPAGTDILFANAIFQWVPDHLTQFKRLAEGLPEGGVLAVQMPDNLDQPSHALMRQVAQLPQFRKQLAHAAEARAALPHPSVYYDALRPLGRALDIWHTVYHHALDDAAAIVEWVKGTGLRPFLDPLDFPERKEFLEAYTARIAEAYPPRIDGKVLLRFPRFFIVLTR.

The protein belongs to the methyltransferase superfamily. Tam family.

The protein resides in the cytoplasm. The enzyme catalyses trans-aconitate + S-adenosyl-L-methionine = (E)-3-(methoxycarbonyl)pent-2-enedioate + S-adenosyl-L-homocysteine. Functionally, catalyzes the S-adenosylmethionine monomethyl esterification of trans-aconitate. The chain is Trans-aconitate 2-methyltransferase from Afipia carboxidovorans (strain ATCC 49405 / DSM 1227 / KCTC 32145 / OM5) (Oligotropha carboxidovorans).